The chain runs to 185 residues: ATP synthase subunit delta (185 aa).

The protein belongs to the ATPase delta chain family. F-type ATPases have 2 components, F(1) - the catalytic core - and F(0) - the membrane proton channel. F(1) has five subunits: alpha(3), beta(3), gamma(1), delta(1), epsilon(1). F(0) has three main subunits: a(1), b(2) and c(10-14). The alpha and beta chains form an alternating ring which encloses part of the gamma chain. F(1) is attached to F(0) by a central stalk formed by the gamma and epsilon chains, while a peripheral stalk is formed by the delta and b chains.

Its subcellular location is the cell inner membrane. In terms of biological role, f(1)F(0) ATP synthase produces ATP from ADP in the presence of a proton or sodium gradient. F-type ATPases consist of two structural domains, F(1) containing the extramembraneous catalytic core and F(0) containing the membrane proton channel, linked together by a central stalk and a peripheral stalk. During catalysis, ATP synthesis in the catalytic domain of F(1) is coupled via a rotary mechanism of the central stalk subunits to proton translocation. Its function is as follows. This protein is part of the stalk that links CF(0) to CF(1). It either transmits conformational changes from CF(0) to CF(1) or is implicated in proton conduction. The polypeptide is ATP synthase subunit delta (Pelagibacter ubique (strain HTCC1062)).